The following is a 555-amino-acid chain: Urocanate hydratase (555 aa).

NAD(+)-binding positions include 52–53 (GG), glutamine 130, 176–178 (GMG), glutamate 196, arginine 201, 242–243 (NA), 263–267 (QTSAH), 273–274 (YL), and tyrosine 322. Cysteine 410 is a catalytic residue. An NAD(+)-binding site is contributed by glycine 492.

It belongs to the urocanase family. NAD(+) is required as a cofactor.

The protein resides in the cytoplasm. The catalysed reaction is 4-imidazolone-5-propanoate = trans-urocanate + H2O. It participates in amino-acid degradation; L-histidine degradation into L-glutamate; N-formimidoyl-L-glutamate from L-histidine: step 2/3. In terms of biological role, catalyzes the conversion of urocanate to 4-imidazolone-5-propionate. This Shewanella baltica (strain OS185) protein is Urocanate hydratase.